The following is a 531-amino-acid chain: Peptide chain release factor 3 (531 aa).

The 270-residue stretch at 11 to 280 folds into the tr-type G domain; it reads GRRRTFAIIS…AFIRFASRPG (270 aa). GTP contacts are provided by residues 20–27, 88–92, and 142–145; these read SHPDAGKT, DTPGH, and NKLD.

The protein belongs to the TRAFAC class translation factor GTPase superfamily. Classic translation factor GTPase family. PrfC subfamily.

The protein localises to the cytoplasm. Increases the formation of ribosomal termination complexes and stimulates activities of RF-1 and RF-2. It binds guanine nucleotides and has strong preference for UGA stop codons. It may interact directly with the ribosome. The stimulation of RF-1 and RF-2 is significantly reduced by GTP and GDP, but not by GMP. This chain is Peptide chain release factor 3, found in Gloeobacter violaceus (strain ATCC 29082 / PCC 7421).